Here is a 310-residue protein sequence, read N- to C-terminus: Beta-ketoacyl-[acyl-carrier-protein] synthase III (310 aa).

Active-site residues include cysteine 116 and histidine 239. The interval glutamine 240–arginine 244 is ACP-binding. Residue asparagine 269 is part of the active site.

It belongs to the thiolase-like superfamily. FabH family. Homodimer.

The protein localises to the cytoplasm. It carries out the reaction malonyl-[ACP] + acetyl-CoA + H(+) = 3-oxobutanoyl-[ACP] + CO2 + CoA. It functions in the pathway lipid metabolism; fatty acid biosynthesis. In terms of biological role, catalyzes the condensation reaction of fatty acid synthesis by the addition to an acyl acceptor of two carbons from malonyl-ACP. Catalyzes the first condensation reaction which initiates fatty acid synthesis and may therefore play a role in governing the total rate of fatty acid production. Possesses both acetoacetyl-ACP synthase and acetyl transacylase activities. Its substrate specificity determines the biosynthesis of branched-chain and/or straight-chain of fatty acids. This chain is Beta-ketoacyl-[acyl-carrier-protein] synthase III, found in Acholeplasma laidlawii (strain PG-8A).